The chain runs to 61 residues: Small ribosomal subunit protein uS14B (61 aa).

Zn(2+)-binding residues include cysteine 24, cysteine 27, cysteine 40, and cysteine 43.

The protein belongs to the universal ribosomal protein uS14 family. Zinc-binding uS14 subfamily. As to quaternary structure, part of the 30S ribosomal subunit. Contacts proteins S3 and S10. The cofactor is Zn(2+).

Binds 16S rRNA, required for the assembly of 30S particles and may also be responsible for determining the conformation of the 16S rRNA at the A site. The sequence is that of Small ribosomal subunit protein uS14B from Lactiplantibacillus plantarum (strain ATCC BAA-793 / NCIMB 8826 / WCFS1) (Lactobacillus plantarum).